The primary structure comprises 385 residues: UPF0284 protein P9301_04631 (385 aa).

This sequence belongs to the UPF0284 family.

In Prochlorococcus marinus (strain MIT 9301), this protein is UPF0284 protein P9301_04631.